Reading from the N-terminus, the 629-residue chain is tRNA uridine 5-carboxymethylaminomethyl modification enzyme MnmG (629 aa).

Residue glycine 13 to glycine 18 coordinates FAD. Glycine 273 to phenylalanine 287 is an NAD(+) binding site.

The protein belongs to the MnmG family. Homodimer. Heterotetramer of two MnmE and two MnmG subunits. FAD is required as a cofactor.

It localises to the cytoplasm. Functionally, NAD-binding protein involved in the addition of a carboxymethylaminomethyl (cmnm) group at the wobble position (U34) of certain tRNAs, forming tRNA-cmnm(5)s(2)U34. The chain is tRNA uridine 5-carboxymethylaminomethyl modification enzyme MnmG from Photorhabdus laumondii subsp. laumondii (strain DSM 15139 / CIP 105565 / TT01) (Photorhabdus luminescens subsp. laumondii).